A 246-amino-acid polypeptide reads, in one-letter code: Mitochondrial inner membrane protease ATP23 homolog (246 aa).

H125 is a binding site for a divalent metal cation. E126 is an active-site residue. An a divalent metal cation-binding site is contributed by H129.

The protein belongs to the peptidase M76 family. In terms of assembly, interacts with XRCC6.

This chain is Mitochondrial inner membrane protease ATP23 homolog, found in Homo sapiens (Human).